We begin with the raw amino-acid sequence, 184 residues long: SsrA-binding protein (184 aa).

The segment covering 1–11 has biased composition (polar residues); it reads MAAKKSTPTDS. The tract at residues 1 to 31 is disordered; sequence MAAKKSTPTDSGKSKGKKNKAQKGAGQKGAG.

It belongs to the SmpB family.

Its subcellular location is the cytoplasm. Functionally, required for rescue of stalled ribosomes mediated by trans-translation. Binds to transfer-messenger RNA (tmRNA), required for stable association of tmRNA with ribosomes. tmRNA and SmpB together mimic tRNA shape, replacing the anticodon stem-loop with SmpB. tmRNA is encoded by the ssrA gene; the 2 termini fold to resemble tRNA(Ala) and it encodes a 'tag peptide', a short internal open reading frame. During trans-translation Ala-aminoacylated tmRNA acts like a tRNA, entering the A-site of stalled ribosomes, displacing the stalled mRNA. The ribosome then switches to translate the ORF on the tmRNA; the nascent peptide is terminated with the 'tag peptide' encoded by the tmRNA and targeted for degradation. The ribosome is freed to recommence translation, which seems to be the essential function of trans-translation. This is SsrA-binding protein from Corynebacterium jeikeium (strain K411).